Reading from the N-terminus, the 895-residue chain is Stonin-2 (895 aa).

3 disordered regions span residues W15–K119, S145–V222, and E234–L280. Residues S64–E73 are compositionally biased toward basic and acidic residues. Residues S145–L193 are compositionally biased toward polar residues. A compositionally biased stretch (pro residues) spans P241–P251. T253 is modified (phosphothreonine). Phosphoserine is present on residues S278 and S299. Short sequence motifs (NPF) lie at residues N310 to F312 and N326 to F328. A disordered region spans residues Q386 to P421. Residues G424–S557 form the SHD domain. The MHD domain maps to E565–E872. The residue at position 759 (S759) is a Phosphoserine.

It belongs to the Stoned B family. In terms of assembly, interacts with the second C2 domain of synaptotagmins SYT1 and SYT2. Interacts with EPS15, EPS15R and ITSN1. Interacts indirectly with the AP-2 adapter complex. Interacts with TOR1A and COPS4; the interaction controls STON2 protein stability. Phosphorylated in vitro by PKD. Post-translationally, neddylated; deneddylated via its interaction with the COP9 signalosome (CSN) complex through TOR1A and COPS4. In terms of processing, ubiquitinated; leading to its degradation.

The protein localises to the cytoplasm. It is found in the membrane. Its subcellular location is the synapse. The protein resides in the synaptosome. Functionally, adapter protein involved in endocytic machinery. Involved in the synaptic vesicle recycling. May facilitate clathrin-coated vesicle uncoating. The chain is Stonin-2 (Ston2) from Mus musculus (Mouse).